A 477-amino-acid chain; its full sequence is Glycogen synthase (477 aa).

ADP-alpha-D-glucose is bound at residue K15.

Belongs to the glycosyltransferase 1 family. Bacterial/plant glycogen synthase subfamily.

It catalyses the reaction [(1-&gt;4)-alpha-D-glucosyl](n) + ADP-alpha-D-glucose = [(1-&gt;4)-alpha-D-glucosyl](n+1) + ADP + H(+). It participates in glycan biosynthesis; glycogen biosynthesis. Its function is as follows. Synthesizes alpha-1,4-glucan chains using ADP-glucose. The polypeptide is Glycogen synthase (glgA) (Salmonella typhimurium (strain LT2 / SGSC1412 / ATCC 700720)).